The following is a 388-amino-acid chain: Succinate--CoA ligase [ADP-forming] subunit beta (388 aa).

One can recognise an ATP-grasp domain in the interval K9–R244. Residues K46, G53–G55, E99, T102, and E107 contribute to the ATP site. Mg(2+) contacts are provided by N199 and D213. Residues N264 and G321–V323 each bind substrate.

This sequence belongs to the succinate/malate CoA ligase beta subunit family. Heterotetramer of two alpha and two beta subunits. Requires Mg(2+) as cofactor.

The catalysed reaction is succinate + ATP + CoA = succinyl-CoA + ADP + phosphate. It carries out the reaction GTP + succinate + CoA = succinyl-CoA + GDP + phosphate. Its pathway is carbohydrate metabolism; tricarboxylic acid cycle; succinate from succinyl-CoA (ligase route): step 1/1. Its function is as follows. Succinyl-CoA synthetase functions in the citric acid cycle (TCA), coupling the hydrolysis of succinyl-CoA to the synthesis of either ATP or GTP and thus represents the only step of substrate-level phosphorylation in the TCA. The beta subunit provides nucleotide specificity of the enzyme and binds the substrate succinate, while the binding sites for coenzyme A and phosphate are found in the alpha subunit. In Serratia proteamaculans (strain 568), this protein is Succinate--CoA ligase [ADP-forming] subunit beta.